A 640-amino-acid chain; its full sequence is Antigenic protein NP1 (640 aa).

Positions 1–288 constitute a Peptidase M60 domain; sequence VQVSIGKCNH…SYVNIAHAFG (288 aa). In terms of domain architecture, PA14 spans 463 to 615; that stretch reads LDPHQVEYEV…TDQSSVNVSK (153 aa).

The chain is Antigenic protein NP1 from Entamoeba histolytica.